The chain runs to 1292 residues: Calcium-transporting ATPase 2 (1292 aa).

Residues 1 to 105 (MPTYNDDDDS…EQASSKSSTS (105 aa)) form a disordered region. Over 1-236 (MPTYNDDDDS…RLMLEAFKDK (236 aa)) the chain is Cytoplasmic. Positions 23 to 41 (KPSSSQFLGVPSSNYNQRE) are enriched in polar residues. The segment covering 44–60 (SRSGSSTISREPSSSGT) has biased composition (low complexity). Residues 68–78 (DSMKESYDKNK) are compositionally biased toward basic and acidic residues. A helical transmembrane segment spans residues 237 to 257 (VLILLSIAAVVSLALGLYQTF). Residues 258–273 (GQPPTLDPITGKPEPR) are Vacuolar-facing. Residues 274–294 (VEWVEGVAIMAAIVIVVTVGG) form a helical membrane-spanning segment. Residues 295-448 (VNDWQKELQF…QLRLSRVADA (154 aa)) are Cytoplasmic-facing. A helical membrane pass occupies residues 449-469 (IAKLGGAASALLFIVLLIEFL). Topologically, residues 470–488 (VRLKSNDSSSKNKGQEFLQ) are vacuolar. A helical transmembrane segment spans residues 489 to 509 (ILIVSVTLLVVAVPEGLPLAV). Ca(2+) is bound by residues V498 and E503. The Cytoplasmic portion of the chain corresponds to 510-938 (TLALAFATNR…GRTVNDAVKK (429 aa)). D545 serves as the catalytic 4-aspartylphosphate intermediate. Mg(2+) contacts are provided by D545 and T547. ATP is bound by residues T547, E638, K691, R736, 807–809 (TGD), R856, and K862. Residue D881 coordinates Mg(2+). N884 is an ATP binding site. Residues 939-959 (FLQFQITVNITAVFLTIISAV) traverse the membrane as a helical segment. N947 lines the Ca(2+) pocket. The Vacuolar segment spans residues 960–966 (ASTDQSS). A helical transmembrane segment spans residues 967–987 (VLTAVQLLWVNLIMDTLAALA). Positions 977 and 981 each coordinate Ca(2+). Residues 988 to 1016 (LATDPPTPEVLKRKPEKPGASLFTFDMWK) lie on the Cytoplasmic side of the membrane. The helical transmembrane segment at 1017–1037 (MIICQSMYQLAVTLVLHFAGN) threads the bilayer. Topologically, residues 1038–1084 (SIFHYPSNTADMNTIVFNTFVWLQLFNEINNRRLDNKLNIFERINHN) are vacuolar. The chain crosses the membrane as a helical span at residues 1085-1105 (FLFIAIFVIVAGIQVIIVFFG). Residues 1106–1115 (GAAFSVKRID) lie on the Cytoplasmic side of the membrane. Residues 1116-1136 (GKGWAISIVFGVISIPLGALI) form a helical membrane-spanning segment. Topologically, residues 1137–1292 (RCVPNNFLRK…ALDKKSSNVH (156 aa)) are vacuolar.

The protein belongs to the cation transport ATPase (P-type) (TC 3.A.3) family.

The protein localises to the vacuole membrane. It carries out the reaction Ca(2+)(in) + ATP + H2O = Ca(2+)(out) + ADP + phosphate + H(+). Its function is as follows. This magnesium-dependent enzyme catalyzes the hydrolysis of ATP coupled with the transport of calcium. Transports the calcium to the vacuole and participates in the control of the cytosolic free calcium. The chain is Calcium-transporting ATPase 2 (pmc1) from Schizosaccharomyces pombe (strain 972 / ATCC 24843) (Fission yeast).